A 227-amino-acid chain; its full sequence is Octanoyltransferase (227 aa).

The BPL/LPL catalytic domain occupies 34-212 (RQREDGLMLL…AFAEVFPVTW (179 aa)). Residues 76–83 (RGGEVTYH), 143–145 (AIA), and 156–158 (GFA) contribute to the substrate site. The active-site Acyl-thioester intermediate is the cysteine 174.

Belongs to the LipB family.

The protein localises to the cytoplasm. The catalysed reaction is octanoyl-[ACP] + L-lysyl-[protein] = N(6)-octanoyl-L-lysyl-[protein] + holo-[ACP] + H(+). Its pathway is protein modification; protein lipoylation via endogenous pathway; protein N(6)-(lipoyl)lysine from octanoyl-[acyl-carrier-protein]: step 1/2. In terms of biological role, catalyzes the transfer of endogenously produced octanoic acid from octanoyl-acyl-carrier-protein onto the lipoyl domains of lipoate-dependent enzymes. Lipoyl-ACP can also act as a substrate although octanoyl-ACP is likely to be the physiological substrate. The protein is Octanoyltransferase of Synechocystis sp. (strain ATCC 27184 / PCC 6803 / Kazusa).